We begin with the raw amino-acid sequence, 175 residues long: Putative FAS1 domain-containing protein 081L (175 aa).

The region spanning 28–172 is the FAS1 domain; it reads GPIVPSVWTI…GLVHIVDQFP (145 aa).

This is Putative FAS1 domain-containing protein 081L from Invertebrate iridescent virus 3 (IIV-3).